Consider the following 315-residue polypeptide: tRNA-cytidine(32) 2-sulfurtransferase (315 aa).

Residues 54-59 (SGGKDS) carry the PP-loop motif motif. [4Fe-4S] cluster is bound by residues cysteine 129, cysteine 132, and cysteine 220.

This sequence belongs to the TtcA family. In terms of assembly, homodimer. Requires Mg(2+) as cofactor. [4Fe-4S] cluster is required as a cofactor.

It localises to the cytoplasm. It carries out the reaction cytidine(32) in tRNA + S-sulfanyl-L-cysteinyl-[cysteine desulfurase] + AH2 + ATP = 2-thiocytidine(32) in tRNA + L-cysteinyl-[cysteine desulfurase] + A + AMP + diphosphate + H(+). Its pathway is tRNA modification. Functionally, catalyzes the ATP-dependent 2-thiolation of cytidine in position 32 of tRNA, to form 2-thiocytidine (s(2)C32). The sulfur atoms are provided by the cysteine/cysteine desulfurase (IscS) system. In Bordetella avium (strain 197N), this protein is tRNA-cytidine(32) 2-sulfurtransferase.